The following is a 251-amino-acid chain: YlmG homolog protein 2, chloroplastic (251 aa).

The transit peptide at 1-51 directs the protein to the chloroplast; that stretch reads MEASANEPAMKSLKSNPSGPIPNFFVSLSSAFTQTPLVRSNKPNLLLLPPV. 2 helical membrane-spanning segments follow: residues 119–139 and 183–203; these read GFAA…NGLI and FIPP…VLNA. Over residues 232-243 the composition is skewed to basic residues; sequence VRRRRLSSHKDH. Residues 232 to 251 are disordered; it reads VRRRRLSSHKDHRPSSASMT.

The protein belongs to the YggT family.

It localises to the plastid. The protein resides in the chloroplast thylakoid membrane. Its function is as follows. Not required for the biogenesis and accumulation of native cytochrome b6 in the thylakoid membrane. Not functionally involved in the pathway for covalent binding of the c-type heme to cytochrome b6. This chain is YlmG homolog protein 2, chloroplastic, found in Arabidopsis thaliana (Mouse-ear cress).